We begin with the raw amino-acid sequence, 177 residues long: Dihydrofolate reductase (177 aa).

The enzyme catalyses (6S)-5,6,7,8-tetrahydrofolate + NADP(+) = 7,8-dihydrofolate + NADPH + H(+). Its function is as follows. Provides the tetrahydrofolates necessary for the synthesis of nucleotides and amino acids. Bacteriophage T5 induces high levels of dihydrofolate reductase in the host cell, probably for the viral replication. This chain is Dihydrofolate reductase, found in Escherichia phage T5 (Enterobacteria phage T5).